Here is a 162-residue protein sequence, read N- to C-terminus: 6,7-dimethyl-8-ribityllumazine synthase (162 aa).

5-amino-6-(D-ribitylamino)uracil contacts are provided by residues phenylalanine 22, 56–58, and 80–82; these read TFE and AVI. 85–86 contacts (2S)-2-hydroxy-3-oxobutyl phosphate; that stretch reads GT. Histidine 88 functions as the Proton donor in the catalytic mechanism. Methionine 113 lines the 5-amino-6-(D-ribitylamino)uracil pocket. Arginine 127 provides a ligand contact to (2S)-2-hydroxy-3-oxobutyl phosphate.

Belongs to the DMRL synthase family.

The enzyme catalyses (2S)-2-hydroxy-3-oxobutyl phosphate + 5-amino-6-(D-ribitylamino)uracil = 6,7-dimethyl-8-(1-D-ribityl)lumazine + phosphate + 2 H2O + H(+). It functions in the pathway cofactor biosynthesis; riboflavin biosynthesis; riboflavin from 2-hydroxy-3-oxobutyl phosphate and 5-amino-6-(D-ribitylamino)uracil: step 1/2. Functionally, catalyzes the formation of 6,7-dimethyl-8-ribityllumazine by condensation of 5-amino-6-(D-ribitylamino)uracil with 3,4-dihydroxy-2-butanone 4-phosphate. This is the penultimate step in the biosynthesis of riboflavin. This Anaeromyxobacter dehalogenans (strain 2CP-C) protein is 6,7-dimethyl-8-ribityllumazine synthase.